The primary structure comprises 262 residues: NADP-dependent mannitol dehydrogenase (262 aa).

NADP(+)-binding residues include Ile23, Asp69, Asn96, and Arg129. The Proton donor role is filled by Ser149. NADP(+) contacts are provided by Tyr169, Lys173, Val202, Thr204, and Gln206. The active-site Proton acceptor is the Tyr169. Residue Lys173 is the Lowers pKa of active site Tyr of the active site.

This sequence belongs to the short-chain dehydrogenases/reductases (SDR) family. As to quaternary structure, homotetramer.

It carries out the reaction D-mannitol + NADP(+) = D-fructose + NADPH + H(+). In Agaricus bisporus (White button mushroom), this protein is NADP-dependent mannitol dehydrogenase (mtdH).